The primary structure comprises 446 residues: Tubulin beta chain (446 aa).

8 residues coordinate GTP: Gln-11, Glu-69, Ser-138, Gly-142, Thr-143, Gly-144, Asn-204, and Asn-226. Residue Glu-69 coordinates Mg(2+). Residues 425 to 446 (YQEASISEGEEEYPEEVSNEEE) are disordered. Positions 432 to 446 (EGEEEYPEEVSNEEE) are enriched in acidic residues.

It belongs to the tubulin family. Dimer of alpha and beta chains. A typical microtubule is a hollow water-filled tube with an outer diameter of 25 nm and an inner diameter of 15 nM. Alpha-beta heterodimers associate head-to-tail to form protofilaments running lengthwise along the microtubule wall with the beta-tubulin subunit facing the microtubule plus end conferring a structural polarity. Microtubules usually have 13 protofilaments but different protofilament numbers can be found in some organisms and specialized cells. Requires Mg(2+) as cofactor.

The protein resides in the cytoplasm. Its subcellular location is the cytoskeleton. Its function is as follows. Tubulin is the major constituent of microtubules, a cylinder consisting of laterally associated linear protofilaments composed of alpha- and beta-tubulin heterodimers. Microtubules grow by the addition of GTP-tubulin dimers to the microtubule end, where a stabilizing cap forms. Below the cap, tubulin dimers are in GDP-bound state, owing to GTPase activity of alpha-tubulin. In Blumeria hordei (Barley powdery mildew), this protein is Tubulin beta chain (TUB2).